Consider the following 146-residue polypeptide: Small ribosomal subunit protein bS6 (146 aa).

The disordered stretch occupies residues 100–146; the sequence is QSAMMRKRDDDDRGDRPDRGDRGRGPRPDRPPRRPRDDAAASDEGGF. Over residues 105 to 138 the composition is skewed to basic and acidic residues; the sequence is RKRDDDDRGDRPDRGDRGRGPRPDRPPRRPRDDA.

Belongs to the bacterial ribosomal protein bS6 family.

Its function is as follows. Binds together with bS18 to 16S ribosomal RNA. This Methylocella silvestris (strain DSM 15510 / CIP 108128 / LMG 27833 / NCIMB 13906 / BL2) protein is Small ribosomal subunit protein bS6.